Here is a 313-residue protein sequence, read N- to C-terminus: Competence protein ComGA (313 aa).

ATP is bound at residue 138-145 (GPVGSGKT).

Belongs to the GSP E family.

It localises to the cell membrane. In terms of biological role, required for uptake of DNA by competent cells. May be involved in assembly of a complex forming a transformation pilus at the surface of competent cells. In Streptococcus pneumoniae (strain ATCC BAA-255 / R6), this protein is Competence protein ComGA.